Here is a 644-residue protein sequence, read N- to C-terminus: Exoribonuclease 2 (644 aa).

Residues Arg-189–Thr-516 enclose the RNB domain. Residues Asp-561–Val-643 enclose the S1 motif domain.

The protein belongs to the RNR ribonuclease family. RNase II subfamily.

Its subcellular location is the cytoplasm. The catalysed reaction is Exonucleolytic cleavage in the 3'- to 5'-direction to yield nucleoside 5'-phosphates.. Its function is as follows. Involved in mRNA degradation. Hydrolyzes single-stranded polyribonucleotides processively in the 3' to 5' direction. This Yersinia enterocolitica serotype O:8 / biotype 1B (strain NCTC 13174 / 8081) protein is Exoribonuclease 2.